A 116-amino-acid polypeptide reads, in one-letter code: Ribosome-binding factor A (116 aa).

Belongs to the RbfA family. In terms of assembly, monomer. Binds 30S ribosomal subunits, but not 50S ribosomal subunits or 70S ribosomes.

Its subcellular location is the cytoplasm. Functionally, one of several proteins that assist in the late maturation steps of the functional core of the 30S ribosomal subunit. Associates with free 30S ribosomal subunits (but not with 30S subunits that are part of 70S ribosomes or polysomes). Required for efficient processing of 16S rRNA. May interact with the 5'-terminal helix region of 16S rRNA. The chain is Ribosome-binding factor A from Streptococcus pyogenes serotype M5 (strain Manfredo).